The sequence spans 295 residues: Elongation factor Ts (295 aa).

Residues 79 to 82 (TDFV) are involved in Mg(2+) ion dislocation from EF-Tu.

The protein belongs to the EF-Ts family.

It is found in the cytoplasm. Functionally, associates with the EF-Tu.GDP complex and induces the exchange of GDP to GTP. It remains bound to the aminoacyl-tRNA.EF-Tu.GTP complex up to the GTP hydrolysis stage on the ribosome. This chain is Elongation factor Ts, found in Mycoplasma mycoides subsp. mycoides SC (strain CCUG 32753 / NCTC 10114 / PG1).